A 2588-amino-acid polypeptide reads, in one-letter code: Histone-lysine N-methyltransferase, H3 lysine-36 specific (2588 aa).

2 positions are modified to phosphoserine: S110 and S118. Disordered stretches follow at residues 209–264 and 277–307; these read GSEQ…LGDT and LSFQ…TSQE. Positions 235 to 249 are enriched in basic and acidic residues; sequence EKQKNKQRSEVDGSN. Polar residues predominate over residues 298–307; that stretch reads GTSSPSTSQE. Phosphoserine occurs at positions 380 and 383. Positions 383-403 are disordered; that stretch reads SADEKEKPCAKSRVRKSSDNI. K802 is covalently cross-linked (Glycyl lysine isopeptide (Lys-Gly) (interchain with G-Cter in SUMO2)). Disordered regions lie at residues 830–899, 947–987, and 1008–1133; these read ASYR…SDKR, ERKR…PGKE, and FDSK…PRLN. Residues 855-874 show a composition bias toward polar residues; that stretch reads GSSTPNSEKPGDSTQDSVHQ. The segment covering 881 to 895 has biased composition (low complexity); it reads SALSGELSSSLSSLA. Over residues 1008–1033 the composition is skewed to basic and acidic residues; sequence FDSKAKQSDPDKNLEKEPSFENRKGP. A compositionally biased stretch (basic residues) spans 1054-1073; that stretch reads PKKRWQRLNQRRPKPGKRAN. K1237 is covalently cross-linked (Glycyl lysine isopeptide (Lys-Gly) (interchain with G-Cter in SUMO2)). Positions 1279–1324 are disordered; sequence ASPRPALESEELLVKTPGNYESKRQRKPTKKLLESNDLDPGFMPKK. Residue S1408 is modified to Phosphoserine. 3 consecutive PHD-type zinc fingers follow at residues 1441–1487, 1488–1544, and 1605–1649; these read ENVC…CHTG, IHTC…CHAA, and VSWC…CKAG. In terms of domain architecture, PWWP spans 1654 to 1716; the sequence is YREIVWVKVG…QARVFPYMEG (63 aa). Residues 1788–1838 enclose the AWS domain; sequence SEIPRCNCKATDENPCGIDSECINRMLLYECHPTVCPAGVRCQNQCFSKRQ. The 118-residue stretch at 1840–1957 folds into the SET domain; the sequence is PDVEIFRTLQ…AGTELTFNYN (118 aa). S-adenosyl-L-methionine contacts are provided by residues 1850 to 1852, 1892 to 1895, 1918 to 1919, N1963, and K1969; these read RGW, TNFY, and NH. An inhibits enzyme activity in the absence of bound histone region spans residues 1958-1964; sequence LECLGNG. In terms of domain architecture, Post-SET spans 1964–1980; it reads GKTVCKCGAPNCSGFLG. The interval 1989–2010 is disordered; the sequence is VTEEKSRKFKRKPHGKRRSQGE. The segment covering 1995–2006 has biased composition (basic residues); it reads RKFKRKPHGKRR. Residues 2016–2063 form a PHD-type 4; atypical zinc finger; the sequence is EDECFSCGDAGQLVSCKKPGCPKVYHADCLNLTKRPAGKWECPWHQCD. 4 disordered regions span residues 2105 to 2320, 2333 to 2423, 2447 to 2521, and 2560 to 2588; these read PCGP…PPPE, KEKA…PSEH, YESA…WGLG, and RGQD…SEKK. A compositionally biased stretch (basic and acidic residues) spans 2179 to 2196; it reads RPPERTDSSSHLLDRIRD. Residues 2201–2212 show a composition bias toward polar residues; it reads GTKSQSLVSSQR. Residues 2213–2223 are compositionally biased toward basic and acidic residues; sequence PQDRPPAKEGP. Residues 2232–2249 are compositionally biased toward low complexity; sequence SPMTRPSSSPSVSSLPLE. The segment covering 2250–2261 has biased composition (basic and acidic residues); sequence RPLRMTDSRLDK. Position 2267 is a phosphoserine (S2267). T2360 bears the Phosphothreonine mark. S2369 is subject to Phosphoserine. A Glycyl lysine isopeptide (Lys-Gly) (interchain with G-Cter in SUMO2) cross-link involves residue K2509.

It belongs to the class V-like SAM-binding methyltransferase superfamily. As to quaternary structure, interacts with AR DNA- and ligand-binding domains. Interacts with the ligand-binding domains of RARA and THRA in the absence of ligand; in the presence of ligand the interaction is severely disrupted but some binding still occurs. Interacts with the ligand-binding domains of RXRA and ESRRA only in the presence of ligand. Interacts with ZNF496. Expressed in the embryo and the outer region of the uterine decidua at early post-implantation 5.5 dpc stage. Uniformly expressed in embryonic and extraembryonic tissues during gastrulation stage 7.5 dpc. Expressed differentially after stage 14.5 dpc with highest expression in proliferating cells. Enriched in the telencephalic region of the brain, spinal cord, intestinal crypt, tooth buds, thymus and salivary glands at stage 16.5 dpc. Also expressed in the ossification region of developing bones and in the periosteum.

It localises to the nucleus. It is found in the chromosome. The catalysed reaction is L-lysyl(36)-[histone H3] + 2 S-adenosyl-L-methionine = N(6),N(6)-dimethyl-L-lysyl(36)-[histone H3] + 2 S-adenosyl-L-homocysteine + 2 H(+). In terms of biological role, histone methyltransferase that dimethylates Lys-36 of histone H3 (H3K36me2). Transcriptional intermediary factor capable of negatively influencing transcription. May also positively influence transcription. Essential for early post-implantation development. The sequence is that of Histone-lysine N-methyltransferase, H3 lysine-36 specific from Mus musculus (Mouse).